Here is a 353-residue protein sequence, read N- to C-terminus: Replication-associated protein (353 aa).

The CRESS-DNA virus Rep endonuclease domain maps to 8 to 116 (RVQSKNYFLT…DGVTIEWGQF (109 aa)). The short motif at 15-18 (FLTY) is the RCR-1 element. A divalent metal cation is bound by residues Glu49, His57, and His59. The RCR-2 signature appears at 57–59 (HLH). Tyr103 functions as the For DNA cleavage activity in the catalytic mechanism. Residues 103-106 (YIDK) carry the RCR-3 motif. Asp107 contacts a divalent metal cation. The interval 143-153 (IESALTILKEE) is binding to RBR1. Positions 156-176 (KDYVLQNHNIRSNLERIFFKV) are oligomerization. 222–229 (GDSRTGKT) provides a ligand contact to ATP.

The protein belongs to the geminiviridae Rep protein family. As to quaternary structure, homooligomer. Interacts with the replication enhancer protein (REn). Interacts with host retinoblastoma-related protein 1 (RBR1), and may thereby induce the transcription of host replicative enzymes even if the cell is not dividing anymore. Interacts with host PCNA. Interacts with host SCE1 protein. Mg(2+) is required as a cofactor. Requires Mn(2+) as cofactor.

The protein localises to the host nucleus. Its function is as follows. Essential for the replication of viral ssDNA. The closed circular ssDNA genome is first converted to a superhelical dsDNA. Rep binds a specific region at the genome origin of replication. It introduces an endonucleolytic nick within the conserved sequence 5'-TAATATTAC-3' in the intergenic region of the genome present in all geminiviruses, thereby initiating the rolling circle replication (RCR). Following cleavage, binds covalently to the 5'-phosphate of DNA as a tyrosyl ester. The cleavage gives rise to a free 3'-OH that serves as a primer for the cellular DNA polymerase. The polymerase synthesizes the (+) strand DNA by rolling circle mechanism. After one round of replication, a Rep-catalyzed nucleotidyl transfer reaction releases a circular single-stranded virus genome, thereby terminating the replication. Displays origin-specific DNA cleavage, nucleotidyl transferase, ATPase and helicase activities. In Macroptilium lathyroides (Lima bean), this protein is Replication-associated protein.